A 367-amino-acid polypeptide reads, in one-letter code: MTAEYTKPVRRITNTEDLEIWNGSQAYSTILDFVQDLQDSVVGLTNDAQVTVSSSSEELLKVLDKVNEIIENNPVVHEKDISRFGKIEFRDFYDEICKKSFDILKPLVEKLEDDPRIELATYFNESWGNRTRIDYGSGHELNFIAFLACLQKLGIIKHEDYPCVIVRVFTKYMTVMRALQKLYWLEPAGSHGVWGLDDYHFLPFLFGSSQLATHPHMKPKSIHNEELVESFYKQYMYLECIHFINTIKTTPANQDQKLSLRWHSPMLDDISSAKSWAKIKEGMIKMYKAEVLGKLPIVQHFMFGSIIPCPDGVSEYHEHDDDSDCGHDHGGTVNTWGDCCGIKIPSALAASEMNKINNPNNKPIPFD.

Belongs to the PTPA-type PPIase family.

It localises to the cytoplasm. It catalyses the reaction [protein]-peptidylproline (omega=180) = [protein]-peptidylproline (omega=0). PPIases accelerate the folding of proteins. It catalyzes the cis-trans isomerization of proline imidic peptide bonds in oligopeptides. Acts as a regulatory subunit for PP2A-like phosphatases modulating their activity or substrate specificity, probably by inducing a conformational change in the catalytic subunit, a direct target of the PPIase. Can reactivate inactive phosphatase PP2A-phosphatase methylesterase complexes (PP2Ai) in presence of ATP and Mg(2+) by dissociating the inactive form from the complex. The chain is Serine/threonine-protein phosphatase 2A activator 2 (RRD2) from Debaryomyces hansenii (strain ATCC 36239 / CBS 767 / BCRC 21394 / JCM 1990 / NBRC 0083 / IGC 2968) (Yeast).